The primary structure comprises 459 residues: Putative metabolite transport protein YdjK (459 aa).

Over 1 to 25 (MEQITKPHCGARLDRLPDCRWHSSM) the chain is Cytoplasmic. The chain crosses the membrane as a helical span at residues 26-46 (FAIVAFGLLVCWSNAVGGLIL). Over 47–60 (AQLKALGWTDNSTT) the chain is Periplasmic. Residues 61–81 (ATFSAITTAGMFLGALVGGII) form a helical membrane-spanning segment. Residues 82 to 90 (GDKTGRRNA) are Cytoplasmic-facing. A helical transmembrane segment spans residues 91–111 (FILYEAIHIASMVVGAFSPNM). D112 is a topological domain (periplasmic). The chain crosses the membrane as a helical span at residues 113–133 (FLIACRFVMGVGLGALLVTLF). At 134-153 (AGFTEYMPGRNRGTWSSRVS) the chain is on the cytoplasmic side. Residues 154–174 (FIGNWSYPLCSLIAMGLTPLI) traverse the membrane as a helical segment. At 175–181 (SAEWNWR) the chain is on the periplasmic side. A helical transmembrane segment spans residues 182 to 202 (VQLLIPAILSLIATALAWRYF). The Cytoplasmic segment spans residues 203–271 (PESPRWLESR…LLKRVILGSC (69 aa)). A helical membrane pass occupies residues 272-292 (VLIAMNVVQYTLINWLPTIFM). The Periplasmic portion of the chain corresponds to 293–301 (TQGINLKDS). Residues 302 to 322 (IVLNTMSMFGAPFGIFIAMLV) form a helical membrane-spanning segment. The Cytoplasmic portion of the chain corresponds to 323–329 (MDKIPRK). The chain crosses the membrane as a helical span at residues 330 to 350 (TMGVGLLILIAVLGYIYSLQT). S351 is a topological domain (periplasmic). A helical membrane pass occupies residues 352 to 372 (MLLITLIGFFLITFVYMYVCY). Residues 373-399 (ASAVYVPEIWPTEAKLRGSGLANAVGR) lie on the Cytoplasmic side of the membrane. The next 2 helical transmembrane spans lie at 400 to 420 (ISGIAAPYAVAVLLSSYGVTG) and 421 to 441 (VFILLGAVSIIVAIAIATIGI). The Cytoplasmic portion of the chain corresponds to 442-459 (ETKGVSVESLSIDAVANK).

It belongs to the major facilitator superfamily. Sugar transporter (TC 2.A.1.1) family.

It localises to the cell inner membrane. The chain is Putative metabolite transport protein YdjK (ydjK) from Escherichia coli (strain K12).